The chain runs to 550 residues: Chaperonin GroEL 1 (550 aa).

ATP-binding positions include 30 to 33 (TLGP), Lys51, 87 to 91 (DGTTT), Gly415, and Asp496.

It belongs to the chaperonin (HSP60) family. As to quaternary structure, forms a cylinder of 14 subunits composed of two heptameric rings stacked back-to-back. Interacts with the co-chaperonin GroES.

Its subcellular location is the cytoplasm. The catalysed reaction is ATP + H2O + a folded polypeptide = ADP + phosphate + an unfolded polypeptide.. In terms of biological role, together with its co-chaperonin GroES, plays an essential role in assisting protein folding. The GroEL-GroES system forms a nano-cage that allows encapsulation of the non-native substrate proteins and provides a physical environment optimized to promote and accelerate protein folding. The sequence is that of Chaperonin GroEL 1 from Rhodopseudomonas palustris (strain HaA2).